The chain runs to 307 residues: Formate hydrogenlyase subunit 4 (307 aa).

The Periplasmic segment spans residues 1 to 2 (MS). The helical transmembrane segment at 3 to 23 (VLYPLIQALVLFAVAPLLSGI) threads the bilayer. Topologically, residues 24-67 (TRVARARLHNRRGPGVLQEYRDIIKLLGRQSVGPDASGWVFRLT) are cytoplasmic. The chain crosses the membrane as a helical span at residues 68–88 (PYVMVGVMLTIATALPVVTVG). Over 89–93 (SPLPQ) the chain is Periplasmic. Residues 94 to 114 (LGDLITLLYLFAIARFFFAIS) form a helical membrane-spanning segment. Over 115-131 (GLDTGSPFTAIGASREA) the chain is Cytoplasmic. Residues 132–152 (MLGVLVEPMLLLGLWVAAQVA) traverse the membrane as a helical segment. The Periplasmic portion of the chain corresponds to 153–167 (GSTNISNITDTVYHW). A helical transmembrane segment spans residues 168–188 (PLSQSIPLVLALCACAFATFI). At 189 to 221 (EMGKLPFDLAEAEQELQEGPLSEYSGSGFGVMK) the chain is on the cytoplasmic side. The chain crosses the membrane as a helical span at residues 222-242 (WGISLKQLVVLQMFVGVFIPW). Residues 243–253 (GQMETFTAGGL) are Periplasmic-facing. Residues 254 to 274 (LLALVIAIVKLVVGVLVIALF) traverse the membrane as a helical segment. Topologically, residues 275–284 (ENSMARLRLD) are cytoplasmic. The helical transmembrane segment at 285 to 305 (ITPRITWAGFGFAFLAFVSLL) threads the bilayer. Residues 306–307 (AA) are Periplasmic-facing.

It belongs to the complex I subunit 1 family. FHL comprises of a formate dehydrogenase, unidentified electron carriers and a hydrogenase (isoenzyme 3). In this non-energy conserving pathway molecular hydrogen and carbodioxide from formate are released.

The protein localises to the cell inner membrane. This Escherichia coli (strain K12) protein is Formate hydrogenlyase subunit 4 (hycD).